The following is a 382-amino-acid chain: Homoserine O-succinyltransferase (382 aa).

The 309-residue stretch at 51–359 folds into the AB hydrolase-1 domain; that stretch reads NAVLICHALS…DAPWGHDAFL (309 aa). The active-site Nucleophile is the Ser157. Arg227 serves as a coordination point for substrate. Catalysis depends on residues Asp322 and His355. Asp356 serves as a coordination point for substrate.

This sequence belongs to the AB hydrolase superfamily. MetX family. As to quaternary structure, homodimer.

Its subcellular location is the cytoplasm. It catalyses the reaction L-homoserine + succinyl-CoA = O-succinyl-L-homoserine + CoA. Its pathway is amino-acid biosynthesis; L-methionine biosynthesis via de novo pathway; O-succinyl-L-homoserine from L-homoserine: step 1/1. Its function is as follows. Transfers a succinyl group from succinyl-CoA to L-homoserine, forming succinyl-L-homoserine. This chain is Homoserine O-succinyltransferase, found in Marinobacter nauticus (strain ATCC 700491 / DSM 11845 / VT8) (Marinobacter aquaeolei).